A 25-amino-acid chain; its full sequence is Xenoposin precursor fragment BM2 (25 aa).

Expressed by the skin glands.

It localises to the secreted. Its function is as follows. Antimicrobial peptide. The chain is Xenoposin precursor fragment BM2 from Xenopus boumbaensis (Mawa clawed frog).